The primary structure comprises 671 residues: Putative glycoside hydrolase BT_3595 (671 aa).

The first 24 residues, 1–24 (MITGIISILCYLQCFGTLSASVTA), serve as a signal peptide directing secretion.

It belongs to the glycoside hydrolase-like 3 (GHL3) family.

The chain is Putative glycoside hydrolase BT_3595 from Bacteroides thetaiotaomicron (strain ATCC 29148 / DSM 2079 / JCM 5827 / CCUG 10774 / NCTC 10582 / VPI-5482 / E50).